A 666-amino-acid chain; its full sequence is Putative cysteine-rich receptor-like protein kinase 31 (666 aa).

The N-terminal stretch at 1-23 (MCLNTLCAILCFVLTVSFGFVSA) is a signal peptide. 2 Gnk2-homologous domains span residues 24-130 (QKCG…NNSF) and 136-245 (LEPT…GYKY). Residues 24–280 (QKCGESVFFR…PDGKKISTGV (257 aa)) are Extracellular-facing. 5 N-linked (GlcNAc...) asparagine glycosylation sites follow: Asn-52, Asn-62, Asn-104, Asn-127, and Asn-151. The helical transmembrane segment at 281–301 (IVAIVVSAVIFVVLVALGLVI) threads the bilayer. The Cytoplasmic portion of the chain corresponds to 302–666 (WKRRQSYKTL…SASITRATPR (365 aa)). The 278-residue stretch at 339 to 616 (FSRNNKLGQG…IFQMLTNSSI (278 aa)) folds into the Protein kinase domain. ATP is bound by residues 345 to 353 (LGQGGFGEV) and Lys-367. At Tyr-412 the chain carries Phosphotyrosine. Residue Asp-464 is the Proton acceptor of the active site. Ser-468 carries the post-translational modification Phosphoserine. Phosphothreonine is present on Thr-504. Tyr-512 is modified (phosphotyrosine).

It belongs to the protein kinase superfamily. Ser/Thr protein kinase family. CRK subfamily.

Its subcellular location is the membrane. The catalysed reaction is L-seryl-[protein] + ATP = O-phospho-L-seryl-[protein] + ADP + H(+). The enzyme catalyses L-threonyl-[protein] + ATP = O-phospho-L-threonyl-[protein] + ADP + H(+). The polypeptide is Putative cysteine-rich receptor-like protein kinase 31 (CRK31) (Arabidopsis thaliana (Mouse-ear cress)).